A 500-amino-acid chain; its full sequence is ATP synthase subunit alpha (500 aa).

169–176 serves as a coordination point for ATP; sequence GDRQTGKT.

It belongs to the ATPase alpha/beta chains family. As to quaternary structure, F-type ATPases have 2 components, CF(1) - the catalytic core - and CF(0) - the membrane proton channel. CF(1) has five subunits: alpha(3), beta(3), gamma(1), delta(1), epsilon(1). CF(0) has three main subunits: a(1), b(2) and c(9-12). The alpha and beta chains form an alternating ring which encloses part of the gamma chain. CF(1) is attached to CF(0) by a central stalk formed by the gamma and epsilon chains, while a peripheral stalk is formed by the delta and b chains.

The protein localises to the cell membrane. It carries out the reaction ATP + H2O + 4 H(+)(in) = ADP + phosphate + 5 H(+)(out). Produces ATP from ADP in the presence of a proton gradient across the membrane. The alpha chain is a regulatory subunit. The protein is ATP synthase subunit alpha of Clostridioides difficile (strain 630) (Peptoclostridium difficile).